The sequence spans 156 residues: Ribosome maturation factor RimP (156 aa).

Belongs to the RimP family.

Its subcellular location is the cytoplasm. Its function is as follows. Required for maturation of 30S ribosomal subunits. This chain is Ribosome maturation factor RimP, found in Dictyoglomus thermophilum (strain ATCC 35947 / DSM 3960 / H-6-12).